The primary structure comprises 306 residues: Glutaminase (306 aa).

Substrate is bound by residues serine 61, asparagine 111, glutamate 155, asparagine 162, tyrosine 186, tyrosine 238, and valine 256.

This sequence belongs to the glutaminase family. In terms of assembly, homotetramer.

The catalysed reaction is L-glutamine + H2O = L-glutamate + NH4(+). This chain is Glutaminase, found in Pseudomonas entomophila (strain L48).